The following is a 468-amino-acid chain: Glutamine synthetase (468 aa).

Positions 13–97 (NEVKFVDLRF…IRCDILEPAT (85 aa)) constitute a GS beta-grasp domain. The region spanning 105–468 (PRSIAKRAED…PVEFELYYSV (364 aa)) is the GS catalytic domain. Mg(2+)-binding residues include Glu130 and Glu132. An ATP-binding site is contributed by Glu208. Mg(2+)-binding residues include Glu213 and Glu220. L-glutamate is bound by residues 264–265 (NG) and Gly265. His269 contributes to the Mg(2+) binding site. ATP-binding positions include 271-273 (HQS) and Ser273. L-glutamate contacts are provided by Arg321, Glu327, and Arg339. Residues Arg339, Arg344, and Lys352 each contribute to the ATP site. Residue Glu357 coordinates Mg(2+). Arg359 is a binding site for L-glutamate. O-AMP-tyrosine is present on Tyr397.

Belongs to the glutamine synthetase family. As to quaternary structure, oligomer of 12 subunits arranged in the form of two hexameric ring. Mg(2+) is required as a cofactor.

Its subcellular location is the cytoplasm. It carries out the reaction L-glutamate + NH4(+) + ATP = L-glutamine + ADP + phosphate + H(+). The activity of this enzyme could be controlled by adenylation under conditions of abundant glutamine. Its function is as follows. Catalyzes the ATP-dependent biosynthesis of glutamine from glutamate and ammonia. The chain is Glutamine synthetase from Vibrio alginolyticus.